We begin with the raw amino-acid sequence, 219 residues long: Sugar transporter SWEET1 (219 aa).

7 helical membrane passes run phenylalanine 3–leucine 23, valine 38–leucine 58, glycine 63–tyrosine 83, leucine 98–glycine 118, leucine 125–leucine 145, leucine 156–leucine 176, and proline 189–proline 209. The region spanning glutamine 5 to lysine 90 is the MtN3/slv 1 domain. The 81-residue stretch at glutamine 124–phenylalanine 204 folds into the MtN3/slv 2 domain.

This sequence belongs to the SWEET sugar transporter family.

The protein localises to the golgi apparatus membrane. The protein resides in the cell membrane. Mediates sugar transport across membranes. The protein is Sugar transporter SWEET1 (slc50a1) of Danio rerio (Zebrafish).